Here is a 122-residue protein sequence, read N- to C-terminus: MARILNIEIPNNKRVVISLTYIYGIGKSLASEICKKANVDENTKTAELTEAQLSKLREVAKAYTTEGDLRREVTLNIKRYMEIKCYRGIRHRKGLPVRGQSTQKNARTRKGPRKTVAGKKGK.

Positions 94–122 (GLPVRGQSTQKNARTRKGPRKTVAGKKGK) are disordered. Positions 106-122 (ARTRKGPRKTVAGKKGK) are enriched in basic residues.

Belongs to the universal ribosomal protein uS13 family. Part of the 30S ribosomal subunit. Forms a loose heterodimer with protein S19. Forms two bridges to the 50S subunit in the 70S ribosome.

Its function is as follows. Located at the top of the head of the 30S subunit, it contacts several helices of the 16S rRNA. In the 70S ribosome it contacts the 23S rRNA (bridge B1a) and protein L5 of the 50S subunit (bridge B1b), connecting the 2 subunits; these bridges are implicated in subunit movement. Contacts the tRNAs in the A and P-sites. The polypeptide is Small ribosomal subunit protein uS13 (Mycoplasmopsis synoviae (strain 53) (Mycoplasma synoviae)).